Reading from the N-terminus, the 590-residue chain is Arginine--tRNA ligase (590 aa).

The 'HIGH' region signature appears at 130-140; the sequence is PNIAKEMHVGH.

This sequence belongs to the class-I aminoacyl-tRNA synthetase family. Monomer.

It localises to the cytoplasm. The enzyme catalyses tRNA(Arg) + L-arginine + ATP = L-arginyl-tRNA(Arg) + AMP + diphosphate. This Synechococcus sp. (strain CC9605) protein is Arginine--tRNA ligase.